A 299-amino-acid polypeptide reads, in one-letter code: ATP phosphoribosyltransferase (299 aa).

It belongs to the ATP phosphoribosyltransferase family. Long subfamily. Requires Mg(2+) as cofactor.

The protein localises to the cytoplasm. It catalyses the reaction 1-(5-phospho-beta-D-ribosyl)-ATP + diphosphate = 5-phospho-alpha-D-ribose 1-diphosphate + ATP. It functions in the pathway amino-acid biosynthesis; L-histidine biosynthesis; L-histidine from 5-phospho-alpha-D-ribose 1-diphosphate: step 1/9. With respect to regulation, feedback inhibited by histidine. In terms of biological role, catalyzes the condensation of ATP and 5-phosphoribose 1-diphosphate to form N'-(5'-phosphoribosyl)-ATP (PR-ATP). Has a crucial role in the pathway because the rate of histidine biosynthesis seems to be controlled primarily by regulation of HisG enzymatic activity. In Campylobacter jejuni subsp. jejuni serotype O:23/36 (strain 81-176), this protein is ATP phosphoribosyltransferase.